Reading from the N-terminus, the 468-residue chain is Na(+)/H(+) antiporter NhaA 2 (468 aa).

The next 11 helical transmembrane spans lie at 31–51 (FLHV…VALA), 82–102 (LHFW…GLEI), 118–138 (VLPV…YLAL), 147–167 (GWGV…ALLG), 176–196 (VLLL…IAVF), 199–219 (SSIS…VLAL), 226–246 (SPVV…SAGV), 321–341 (PWVA…VSLG), 353–373 (LLLG…MVAC), 393–413 (VLVV…VAGL), and 422–442 (GVAK…AMAV).

This sequence belongs to the NhaA Na(+)/H(+) (TC 2.A.33) antiporter family.

It localises to the cell inner membrane. It carries out the reaction Na(+)(in) + 2 H(+)(out) = Na(+)(out) + 2 H(+)(in). In terms of biological role, na(+)/H(+) antiporter that extrudes sodium in exchange for external protons. The sequence is that of Na(+)/H(+) antiporter NhaA 2 from Sorangium cellulosum (strain So ce56) (Polyangium cellulosum (strain So ce56)).